The following is a 208-amino-acid chain: Thioesterase 1/protease 1/lysophospholipase L1 (208 aa).

The N-terminal stretch at 1-26 (MMNFNNVFRWHLPFLFLVLLTFRAAA) is a signal peptide. Catalysis depends on serine 36, which acts as the Nucleophile. Residues glycine 70 and asparagine 99 each coordinate substrate. Residues aspartate 180 and histidine 183 contribute to the active site.

The protein belongs to the 'GDSL' lipolytic enzyme family. Monomer or homotetramer.

Its subcellular location is the periplasm. The enzyme catalyses a fatty acyl-CoA + H2O = a fatty acid + CoA + H(+). It carries out the reaction hexadecanoyl-CoA + H2O = hexadecanoate + CoA + H(+). The catalysed reaction is (9Z)-hexadecenoyl-CoA + H2O = (9Z)-hexadecenoate + CoA + H(+). It catalyses the reaction octadecanoyl-CoA + H2O = octadecanoate + CoA + H(+). The enzyme catalyses (9Z)-octadecenoyl-CoA + H2O = (9Z)-octadecenoate + CoA + H(+). It carries out the reaction (9Z)-octadecenoyl-[ACP] + H2O = (9Z)-octadecenoate + holo-[ACP] + H(+). The catalysed reaction is (11Z)-octadecenoyl-CoA + H2O = (11Z)-octadecenoate + CoA + H(+). It catalyses the reaction tetradecanoyl-CoA + H2O = tetradecanoate + CoA + H(+). The enzyme catalyses (5Z,8Z,11Z,14Z)-eicosatetraenoyl-CoA + H2O = (5Z,8Z,11Z,14Z)-eicosatetraenoate + CoA + H(+). It carries out the reaction dodecanoyl-CoA + H2O = dodecanoate + CoA + H(+). The catalysed reaction is decanoyl-CoA + H2O = decanoate + CoA + H(+). It catalyses the reaction hexanoyl-CoA + H2O = hexanoate + CoA + H(+). The enzyme catalyses a 1-acyl-sn-glycero-3-phosphocholine + H2O = sn-glycerol 3-phosphocholine + a fatty acid + H(+). It carries out the reaction a phenyl acetate + H2O = a phenol + acetate + H(+). The catalysed reaction is a butanoate ester + H2O = an aliphatic alcohol + butanoate + H(+). It catalyses the reaction a hexanoate ester + H2O = an aliphatic alcohol + hexanoate + H(+). The enzyme catalyses an octanoate ester + H2O = an aliphatic alcohol + octanoate + H(+). TesA is a multifunctional esterase that can act as a thioesterase, arylesterase, lysophospholipase and protease. In Escherichia coli O6:H1 (strain CFT073 / ATCC 700928 / UPEC), this protein is Thioesterase 1/protease 1/lysophospholipase L1 (tesA).